The primary structure comprises 250 residues: Triosephosphate isomerase, glycosomal (250 aa).

Substrate is bound by residues Asn-11 and Lys-13. The Electrophile role is filled by His-95. Glu-167 (proton acceptor) is an active-site residue.

This sequence belongs to the triosephosphate isomerase family. Homodimer.

The protein resides in the glycosome. The enzyme catalyses D-glyceraldehyde 3-phosphate = dihydroxyacetone phosphate. Its pathway is carbohydrate biosynthesis; gluconeogenesis. It functions in the pathway carbohydrate degradation; glycolysis; D-glyceraldehyde 3-phosphate from glycerone phosphate: step 1/1. In Trypanosoma brucei brucei, this protein is Triosephosphate isomerase, glycosomal.